Reading from the N-terminus, the 683-residue chain is Leucine-rich repeat and calponin homology domain-containing protein 4 (683 aa).

A compositionally biased stretch (low complexity) spans Met1 to Ala18. The tract at residues Met1–Ala34 is disordered. 9 LRR repeats span residues Ala41–Ser64, Leu67–Leu90, Ser92–Leu113, Thr114–Leu136, Leu138–Leu158, Gly159–Leu181, Ser182–Leu204, Leu206–Leu226, and Arg227–Gly250. Residues Ala268–His292 form a disordered region. Phosphoserine occurs at positions 279, 281, 304, 307, 309, and 313. 2 disordered regions span residues Phe326–Pro436 and Ser449–Asp539. Composition is skewed to basic and acidic residues over residues Glu330–Gly345, Ile357–Pro376, and Gly384–Gln418. Phosphoserine is present on residues Ser432 and Ser457. The span at Ser449–Ser460 shows a compositional bias: polar residues. 2 stretches are compositionally biased toward low complexity: residues Ser461 to Gln481 and Ser511 to Ser524. 5 positions are modified to phosphoserine: Ser511, Ser513, Ser517, Ser521, and Ser589. One can recognise a Calponin-homology (CH) domain in the interval Val534 to Gly647. A helical membrane pass occupies residues Leu653–Leu673.

Its subcellular location is the cell membrane. Accessory protein that regulates signaling by multiple TLRs, acting as a broad-spanning regulator of the innate immune response. In macrophages, binds LPS and promotes proper docking of LPS in lipid raft membrane. May be required for lipid raft maintenance. The protein is Leucine-rich repeat and calponin homology domain-containing protein 4 of Homo sapiens (Human).